We begin with the raw amino-acid sequence, 421 residues long: MYAFVRFLEDNVCYALPVSCVRDFSPRSRLDFDNQKVYAVYRGPEELGAEPESPPRAPRDWGALLLHKAQILALAEDKSDLENSVMQKKIKIPKLSLSHVEDDGEVKDYGEEDLQLRHIKRPEGRKPSEAAHKSIEAVVARLERQNGLSLGHSTCPEEVFVEASPGTEDMDSLEDAVVPRALYEELLRNYQQQQEEMRHLQQELERTRRQLVQQAKKLKEYGALVSEMKELRDLNRRLQDVLLLRLGSGPAIDLEKVKSECLEPEPELRSTFSEEANTSSYYPAPAPVMDKYILDNGKVHLGSGIWVDEEKWHQLQVTQGDSKYTKNLAVMIWGTDVLKNRSVTGVATKKKKDAIPKPPLSPHKLSIVRECLYDRIAQETVDETEIAQRLSKVNKYICEKIMDINKSCKNEERREAKYNLQ.

Lysine 133 bears the N6-acetyllysine mark. The stretch at 180-243 forms a coiled coil; the sequence is RALYEELLRN…LNRRLQDVLL (64 aa). A Glycyl lysine isopeptide (Lys-Gly) (interchain with G-Cter in SUMO2) cross-link involves residue lysine 258. Residues 302–408 form the BEN domain; it reads GSGIWVDEEK…EKIMDINKSC (107 aa).

Its function is as follows. Acts as a transcriptional repressor. This Mus musculus (Mouse) protein is BEN domain-containing protein 5 (Bend5).